Reading from the N-terminus, the 32-residue chain is Fibrinolytic enzyme 2 (32 aa).

In terms of domain architecture, Peptidase S8 spans 1 to 32 (ISGTSMSCPHVAGRAYVLDTSLRVYLLDTGLR). Ser5 (charge relay system) is an active-site residue.

Belongs to the peptidase S8 family.

Inhibited by PMSF. Not inhibited by benzamidine, aprotinin, SBTI, EDTA, EGTA, 2-mercaptoethanol, iodoacetic acid or pepstatin A. Functionally, serine protease. Has fibrinolytic and fibrinogenolytic but no plasminogenolytic activity. Cleaves after Arg and Lys residues. Cleaves fibrinogen alpha chain, beta chain and gamma chain in that order. This chain is Fibrinolytic enzyme 2, found in Hediste japonica (Polychaete worm).